The following is a 334-amino-acid chain: Ribosomal RNA small subunit methyltransferase H (334 aa).

S-adenosyl-L-methionine is bound by residues 53–55, aspartate 72, phenylalanine 99, aspartate 122, and histidine 129; that span reads GGH.

The protein belongs to the methyltransferase superfamily. RsmH family.

It is found in the cytoplasm. The enzyme catalyses cytidine(1402) in 16S rRNA + S-adenosyl-L-methionine = N(4)-methylcytidine(1402) in 16S rRNA + S-adenosyl-L-homocysteine + H(+). Specifically methylates the N4 position of cytidine in position 1402 (C1402) of 16S rRNA. The protein is Ribosomal RNA small subunit methyltransferase H of Leptospira interrogans serogroup Icterohaemorrhagiae serovar Lai (strain 56601).